Consider the following 369-residue polypeptide: Anhydro-N-acetylmuramic acid kinase (369 aa).

Residue G12 to D19 participates in ATP binding.

The protein belongs to the anhydro-N-acetylmuramic acid kinase family.

The catalysed reaction is 1,6-anhydro-N-acetyl-beta-muramate + ATP + H2O = N-acetyl-D-muramate 6-phosphate + ADP + H(+). The protein operates within amino-sugar metabolism; 1,6-anhydro-N-acetylmuramate degradation. It functions in the pathway cell wall biogenesis; peptidoglycan recycling. In terms of biological role, catalyzes the specific phosphorylation of 1,6-anhydro-N-acetylmuramic acid (anhMurNAc) with the simultaneous cleavage of the 1,6-anhydro ring, generating MurNAc-6-P. Is required for the utilization of anhMurNAc either imported from the medium or derived from its own cell wall murein, and thus plays a role in cell wall recycling. In Escherichia coli O1:K1 / APEC, this protein is Anhydro-N-acetylmuramic acid kinase.